Here is a 238-residue protein sequence, read N- to C-terminus: Uracil-DNA glycosylase (238 aa).

Catalysis depends on Asp81, which acts as the Proton acceptor.

The protein belongs to the uracil-DNA glycosylase (UDG) superfamily. UNG family.

The protein resides in the cytoplasm. The enzyme catalyses Hydrolyzes single-stranded DNA or mismatched double-stranded DNA and polynucleotides, releasing free uracil.. In terms of biological role, excises uracil residues from the DNA which can arise as a result of misincorporation of dUMP residues by DNA polymerase or due to deamination of cytosine. The sequence is that of Uracil-DNA glycosylase from Corynebacterium efficiens (strain DSM 44549 / YS-314 / AJ 12310 / JCM 11189 / NBRC 100395).